A 455-amino-acid polypeptide reads, in one-letter code: Epoxide hydrolase 1 (455 aa).

The chain crosses the membrane as a helical; Signal-anchor for type III membrane protein span at residues 1–21; that stretch reads MWLEILLTSVLGFAIYWFISR. The Cytoplasmic portion of the chain corresponds to 22–455; sequence DKEETLPLED…RKFLSVLERQ (434 aa). Asp226 acts as the Nucleophile in catalysis. Dimethylated arginine is present on Arg295. Tyr374 (proton donor) is an active-site residue. The Proton acceptor role is filled by His431.

It belongs to the peptidase S33 family. As to expression, found in liver.

The protein resides in the microsome membrane. It localises to the endoplasmic reticulum membrane. The catalysed reaction is cis-stilbene oxide + H2O = (1R,2R)-hydrobenzoin. The enzyme catalyses 1-(4-methoxyphenyl)-N-methyl-N-[(3-methyloxetan-3-yl)methyl]methanamine + H2O = 2-{[(4-methoxybenzyl)(methyl)amino]methyl}-2-methylpropane-1,3-diol. It catalyses the reaction 8,9-epoxy-(5Z,11Z,14Z)-eicosatrienoate + H2O = 8,9-dihydroxy-(5Z,11Z,14Z)-eicosatrienoate. It carries out the reaction 11,12-epoxy-(5Z,8Z,14Z)-eicosatrienoate + H2O = 11,12-dihydroxy-(5Z,8Z,14Z)-eicosatrienoate. The catalysed reaction is 2-(5Z,8Z,11Z,14Z-eicosatetraenoyl)-glycerol + H2O = glycerol + (5Z,8Z,11Z,14Z)-eicosatetraenoate + H(+). Inhibited by 10-hydroxystearamide and methoxy-arachidonyl fluorophosphate. Its function is as follows. Biotransformation enzyme that catalyzes the hydrolysis of arene and aliphatic epoxides to less reactive and more water soluble dihydrodiols by the trans addition of water. Plays a role in the metabolism of endogenous lipids such as epoxide-containing fatty acids. Metabolizes the abundant endocannabinoid 2-arachidonoylglycerol (2-AG) to free arachidonic acid (AA) and glycerol. Binds 20(S)-hydroxycholesterol (20(S)-OHC). This Homo sapiens (Human) protein is Epoxide hydrolase 1.